The following is a 131-amino-acid chain: Modulator protein MzrA (131 aa).

Topologically, residues 1-14 are cytoplasmic; that stretch reads MSIRWLFPKLTPRK. The helical transmembrane segment at 15–31 threads the bilayer; it reads VARILILLALPIIALTQ. Residues 32 to 131 lie on the Periplasmic side of the membrane; that stretch reads SQSLRHSQDD…KLTQKQSKLG (100 aa).

The protein belongs to the MzrA family. In terms of assembly, interacts with EnvZ.

The protein localises to the cell inner membrane. Modulates the activity of the EnvZ/OmpR two-component regulatory system, probably by directly modulating EnvZ enzymatic activity and increasing stability of phosphorylated OmpR. This Pectobacterium carotovorum subsp. carotovorum (strain PC1) protein is Modulator protein MzrA.